The following is a 344-amino-acid chain: Serine/threonine-protein kinase ppk13 (344 aa).

ATP contacts are provided by residues L38–V46 and K61. The Protein kinase domain occupies M76 to Q344. The active-site Proton acceptor is the H192.

This sequence belongs to the protein kinase superfamily. Ser/Thr protein kinase family.

Its subcellular location is the endoplasmic reticulum. The protein resides in the golgi apparatus. The enzyme catalyses L-seryl-[protein] + ATP = O-phospho-L-seryl-[protein] + ADP + H(+). It catalyses the reaction L-threonyl-[protein] + ATP = O-phospho-L-threonyl-[protein] + ADP + H(+). This chain is Serine/threonine-protein kinase ppk13 (ppk13), found in Schizosaccharomyces pombe (strain 972 / ATCC 24843) (Fission yeast).